The chain runs to 565 residues: CTP synthase (565 aa).

An amidoligase domain region spans residues 1 to 272; it reads MARPKNVKHI…DLRVLKKLGL (272 aa). S18 provides a ligand contact to CTP. S18 serves as a coordination point for UTP. ATP is bound at residue 19–24; sequence SLGKGI. Y59 serves as a coordination point for L-glutamine. D76 lines the ATP pocket. Positions 76 and 146 each coordinate Mg(2+). CTP is bound by residues 153 to 155, 193 to 198, and K229; these read DIE and KTKPTQ. UTP-binding positions include 193–198 and K229; that span reads KTKPTQ. Positions 299-543 constitute a Glutamine amidotransferase type-1 domain; that stretch reads TIGICGKYTE…VAAAKEYAHG (245 aa). Residue G363 coordinates L-glutamine. C390 (nucleophile; for glutamine hydrolysis) is an active-site residue. L-glutamine-binding positions include 391–394, E414, and R471; that span reads LGMQ. Active-site residues include H516 and E518.

It belongs to the CTP synthase family. Homotetramer.

It carries out the reaction UTP + L-glutamine + ATP + H2O = CTP + L-glutamate + ADP + phosphate + 2 H(+). The catalysed reaction is L-glutamine + H2O = L-glutamate + NH4(+). The enzyme catalyses UTP + NH4(+) + ATP = CTP + ADP + phosphate + 2 H(+). It functions in the pathway pyrimidine metabolism; CTP biosynthesis via de novo pathway; CTP from UDP: step 2/2. With respect to regulation, allosterically activated by GTP, when glutamine is the substrate; GTP has no effect on the reaction when ammonia is the substrate. The allosteric effector GTP functions by stabilizing the protein conformation that binds the tetrahedral intermediate(s) formed during glutamine hydrolysis. Inhibited by the product CTP, via allosteric rather than competitive inhibition. Functionally, catalyzes the ATP-dependent amination of UTP to CTP with either L-glutamine or ammonia as the source of nitrogen. Regulates intracellular CTP levels through interactions with the four ribonucleotide triphosphates. The chain is CTP synthase from Pelodictyon phaeoclathratiforme (strain DSM 5477 / BU-1).